We begin with the raw amino-acid sequence, 199 residues long: Protein-methionine-sulfoxide reductase heme-binding subunit MsrQ (199 aa).

Helical transmembrane passes span 13-33, 79-99, 120-140, 147-167, and 169-189; these read VLLH…VDQG, LLGL…ALLE, LGVI…QIMM, WQKL…HYLW, and VKTL…LLLF.

Belongs to the MsrQ family. In terms of assembly, heterodimer of a catalytic subunit (MsrP) and a heme-binding subunit (MsrQ). FMN serves as cofactor. It depends on heme b as a cofactor.

It localises to the cell inner membrane. Functionally, part of the MsrPQ system that repairs oxidized periplasmic proteins containing methionine sulfoxide residues (Met-O), using respiratory chain electrons. Thus protects these proteins from oxidative-stress damage caused by reactive species of oxygen and chlorine generated by the host defense mechanisms. MsrPQ is essential for the maintenance of envelope integrity under bleach stress, rescuing a wide series of structurally unrelated periplasmic proteins from methionine oxidation. MsrQ provides electrons for reduction to the reductase catalytic subunit MsrP, using the quinone pool of the respiratory chain. This is Protein-methionine-sulfoxide reductase heme-binding subunit MsrQ from Pectobacterium carotovorum subsp. carotovorum (strain PC1).